We begin with the raw amino-acid sequence, 336 residues long: tRNA(Ile)-lysidine synthase (336 aa).

Residue 40-45 (SGGQDS) participates in ATP binding.

It belongs to the tRNA(Ile)-lysidine synthase family.

The protein resides in the cytoplasm. It carries out the reaction cytidine(34) in tRNA(Ile2) + L-lysine + ATP = lysidine(34) in tRNA(Ile2) + AMP + diphosphate + H(+). In terms of biological role, ligates lysine onto the cytidine present at position 34 of the AUA codon-specific tRNA(Ile) that contains the anticodon CAU, in an ATP-dependent manner. Cytidine is converted to lysidine, thus changing the amino acid specificity of the tRNA from methionine to isoleucine. The sequence is that of tRNA(Ile)-lysidine synthase from Prochlorococcus marinus (strain SARG / CCMP1375 / SS120).